Consider the following 635-residue polypeptide: Threonine--tRNA ligase (635 aa).

The TGS domain maps to 1–61; that stretch reads MINISFPDGS…DNDCKLRILT (61 aa). The segment at 242-533 is catalytic; it reads DHRKLGRELD…LIEEYAGRFP (292 aa). C333, H384, and H510 together coordinate Zn(2+).

It belongs to the class-II aminoacyl-tRNA synthetase family. In terms of assembly, homodimer. The cofactor is Zn(2+).

The protein resides in the cytoplasm. It catalyses the reaction tRNA(Thr) + L-threonine + ATP = L-threonyl-tRNA(Thr) + AMP + diphosphate + H(+). Catalyzes the attachment of threonine to tRNA(Thr) in a two-step reaction: L-threonine is first activated by ATP to form Thr-AMP and then transferred to the acceptor end of tRNA(Thr). Also edits incorrectly charged L-seryl-tRNA(Thr). The chain is Threonine--tRNA ligase from Rickettsia africae (strain ESF-5).